Reading from the N-terminus, the 450-residue chain is uncharacterized protein (450 aa).

One can recognise a TRAM domain in the interval 1 to 58 (MAKGEIVTVKIEEMDFKGYGVGYCEGKPLKVRGGILGQRVAVRVKKGKKGRAEGEIVE). Positions 71, 77, 80, and 159 each coordinate [4Fe-4S] cluster. Residues Gln-285, Tyr-314, Glu-335, and Asp-380 each coordinate S-adenosyl-L-methionine. Cys-407 (nucleophile) is an active-site residue.

Belongs to the class I-like SAM-binding methyltransferase superfamily. RNA M5U methyltransferase family.

This is an uncharacterized protein from Caldanaerobacter subterraneus subsp. tengcongensis (strain DSM 15242 / JCM 11007 / NBRC 100824 / MB4) (Thermoanaerobacter tengcongensis).